Here is a 304-residue protein sequence, read N- to C-terminus: Ribosomal RNA small subunit methyltransferase H (304 aa).

Residues 47–49 (GGH), D66, F93, D108, and Q115 each bind S-adenosyl-L-methionine.

This sequence belongs to the methyltransferase superfamily. RsmH family.

The protein localises to the cytoplasm. It catalyses the reaction cytidine(1402) in 16S rRNA + S-adenosyl-L-methionine = N(4)-methylcytidine(1402) in 16S rRNA + S-adenosyl-L-homocysteine + H(+). Its function is as follows. Specifically methylates the N4 position of cytidine in position 1402 (C1402) of 16S rRNA. The chain is Ribosomal RNA small subunit methyltransferase H from Prochlorococcus marinus (strain NATL1A).